The chain runs to 838 residues: Sec1 family domain-containing protein MIP3 (838 aa).

The tract at residues 637 to 677 (KSEETKEIPSDDQLDIDALDDDPWGKWGDEEEEEVDNSKAD) is disordered. Positions 646–658 (SDDQLDIDALDDD) are enriched in acidic residues.

Belongs to the STXBP/unc-18/SEC1 family. Forms a complex with MAG2, ZW10/MIP1 and MIP2 on the endoplasmic reticulum.

The protein resides in the endoplasmic reticulum membrane. In terms of biological role, required for proper maturation of seed storage proteins. Forms a complex with MAG2, ZW10/MIP1 and MIP2 on the endoplasmic reticulum that may be responsible for efficient transport of seed storage proteins. This Arabidopsis thaliana (Mouse-ear cress) protein is Sec1 family domain-containing protein MIP3.